Consider the following 695-residue polypeptide: UvrABC system protein C (695 aa).

Basic and acidic residues predominate over residues 1–10 (MNHDPAETRD). Positions 1 to 44 (MNHDPAETRDTAAAPLADTESPSPVSPELTPHPAPAAQDIDTAT) are disordered. Residues 88–166 (TSPGVYRMLN…IKQLRPRFNV (79 aa)) enclose the GIY-YIG domain. The UVR domain maps to 276–311 (RAVKQELAVEMEKASNELEFETAALYRDRLAALSAI).

It belongs to the UvrC family. Interacts with UvrB in an incision complex.

The protein resides in the cytoplasm. Its function is as follows. The UvrABC repair system catalyzes the recognition and processing of DNA lesions. UvrC both incises the 5' and 3' sides of the lesion. The N-terminal half is responsible for the 3' incision and the C-terminal half is responsible for the 5' incision. The chain is UvrABC system protein C from Rhodopseudomonas palustris (strain HaA2).